The chain runs to 87 residues: DNA-directed RNA polymerase subunit omega (87 aa).

The protein belongs to the RNA polymerase subunit omega family. The RNAP catalytic core consists of 2 alpha, 1 beta, 1 beta' and 1 omega subunit. When a sigma factor is associated with the core the holoenzyme is formed, which can initiate transcription.

It catalyses the reaction RNA(n) + a ribonucleoside 5'-triphosphate = RNA(n+1) + diphosphate. Its function is as follows. Promotes RNA polymerase assembly. Latches the N- and C-terminal regions of the beta' subunit thereby facilitating its interaction with the beta and alpha subunits. This is DNA-directed RNA polymerase subunit omega from Pseudomonas putida (strain ATCC 700007 / DSM 6899 / JCM 31910 / BCRC 17059 / LMG 24140 / F1).